Consider the following 150-residue polypeptide: Mating pheromone 1 (150 aa).

Residues 1–16 (MKAIFIILAILMVTQA) form the signal peptide. The propeptide occupies 17 to 52 (FKMTSKVNTKLQSQIQSKFQSKNKLASTFQTSSKLK).

The protein localises to the secreted. Its function is as follows. Mating ciliate pheromones (or gamones) are diffusible extracellular communication signals that distinguish different intraspecific classes of cells commonly referred to as 'mating types'. They prepare the latter for conjugation by changing their cell surface properties. The chain is Mating pheromone 1 from Euplotoides octocarinatus (Freshwater ciliate).